Reading from the N-terminus, the 357-residue chain is UDP-N-acetylglucosamine--N-acetylmuramyl-(pentapeptide) pyrophosphoryl-undecaprenol N-acetylglucosamine transferase (357 aa).

UDP-N-acetyl-alpha-D-glucosamine contacts are provided by residues 14–16, Asn-125, Ser-190, and Gln-290; that span reads SGG.

Belongs to the glycosyltransferase 28 family. MurG subfamily.

The protein localises to the cell inner membrane. It catalyses the reaction di-trans,octa-cis-undecaprenyl diphospho-N-acetyl-alpha-D-muramoyl-L-alanyl-D-glutamyl-meso-2,6-diaminopimeloyl-D-alanyl-D-alanine + UDP-N-acetyl-alpha-D-glucosamine = di-trans,octa-cis-undecaprenyl diphospho-[N-acetyl-alpha-D-glucosaminyl-(1-&gt;4)]-N-acetyl-alpha-D-muramoyl-L-alanyl-D-glutamyl-meso-2,6-diaminopimeloyl-D-alanyl-D-alanine + UDP + H(+). It participates in cell wall biogenesis; peptidoglycan biosynthesis. Functionally, cell wall formation. Catalyzes the transfer of a GlcNAc subunit on undecaprenyl-pyrophosphoryl-MurNAc-pentapeptide (lipid intermediate I) to form undecaprenyl-pyrophosphoryl-MurNAc-(pentapeptide)GlcNAc (lipid intermediate II). This is UDP-N-acetylglucosamine--N-acetylmuramyl-(pentapeptide) pyrophosphoryl-undecaprenol N-acetylglucosamine transferase from Chlamydia felis (strain Fe/C-56) (Chlamydophila felis).